We begin with the raw amino-acid sequence, 114 residues long: Probable prefoldin subunit 2 (114 aa).

This sequence belongs to the prefoldin subunit beta family. In terms of assembly, heterohexamer of two PFD-alpha type and four PFD-beta type subunits.

Binds specifically to cytosolic chaperonin (c-CPN) and transfers target proteins to it. Binds to nascent polypeptide chain and promotes folding in an environment in which there are many competing pathways for nonnative proteins. This chain is Probable prefoldin subunit 2, found in Schizosaccharomyces pombe (strain 972 / ATCC 24843) (Fission yeast).